A 231-amino-acid chain; its full sequence is Histone H1 (231 aa).

The segment covering 1 to 17 has biased composition (low complexity); it reads MSDPAIEVAPVPVASPA. Disordered regions lie at residues 1–44 and 124–231; these read MSDP…PVSD and TKKV…AKKA. Positions 38–112 constitute an H15 domain; sequence THPPVSDMIV…GASGSFKLPA (75 aa). Composition is skewed to basic residues over residues 145–171, 178–213, and 221–231; these read KVKK…KTTK, PTKK…KAKK, and KAAKKPSAKKA.

The protein belongs to the histone H1/H5 family.

The protein localises to the nucleus. It is found in the chromosome. In terms of biological role, histones H1 are necessary for the condensation of nucleosome chains into higher-order structures. The chain is Histone H1 from Chironomus thummi thummi (Midge).